A 77-amino-acid polypeptide reads, in one-letter code: MAHHRPKPDDRSDNVEKLQDMVQNTIENIEKAEETMQFASPEEREKIAEKNKRREEAIAAMRAEIKDEAAARENGYR.

Belongs to the Tlp family.

It is found in the spore core. This is Small, acid-soluble spore protein Tlp from Geobacillus sp. (strain WCH70).